Reading from the N-terminus, the 332-residue chain is Adenosine receptor A2b (332 aa).

Topologically, residues 1 to 8 (MLLETQDA) are extracellular. A helical transmembrane segment spans residues 9 to 33 (LYVALELVIAALSVAGNVLVCAAVG). The Cytoplasmic portion of the chain corresponds to 34–43 (TANTLQTPTN). A helical transmembrane segment spans residues 44–67 (YFLVSLAAADVAVGLFAIPFAITI). At 68–78 (SLGFCTDFYGC) the chain is on the extracellular side. An intrachain disulfide couples cysteine 78 to cysteine 171. Residues 79 to 101 (LFLACFVLVLTQSSIFSLLAVAV) form a helical membrane-spanning segment. At 102 to 121 (DRYLAICVPLRYKSLVTGTR) the chain is on the cytoplasmic side. A helical membrane pass occupies residues 122–144 (ARGVIAVLWVLAFGIGLTPFLGW). At 145–178 (NSKDSATNNCTEPWDGTTNESCCLVKCLFENVVP) the chain is on the extracellular side. Asparagine 153 and asparagine 163 each carry an N-linked (GlcNAc...) asparagine glycan. Glutamate 174 contacts adenosine. A helical transmembrane segment spans residues 179 to 203 (MSYMVYFNFFGCVLPPLLIMLVIYI). Residues 204–235 (KIFLVACRQLQRTELMDHSRTTLQREIHAAKS) are Cytoplasmic-facing. Residues 236 to 259 (LAMIVGIFALCWLPVHAVNCVTLF) traverse the membrane as a helical segment. An adenosine-binding site is contributed by asparagine 254. The Extracellular segment spans residues 260–267 (QPAQGKNK). A helical transmembrane segment spans residues 268 to 291 (PKWAMNMAILLSHANSVVNPIVYA). The adenosine site is built by serine 279 and histidine 280. The Cytoplasmic portion of the chain corresponds to 292-332 (YRNRDFRYTFHKIISRYLLCQADVKSGNGQAGVQPALGVGL). The S-palmitoyl cysteine moiety is linked to residue cysteine 311.

This sequence belongs to the G-protein coupled receptor 1 family.

The protein resides in the cell membrane. Its function is as follows. Receptor for adenosine. The activity of this receptor is mediated by G proteins which activate adenylyl cyclase. The protein is Adenosine receptor A2b (ADORA2B) of Homo sapiens (Human).